We begin with the raw amino-acid sequence, 61 residues long: Metallothionein-2 (61 aa).

An N-acetylmethionine modification is found at Met1. Residues 1–29 (MDPNCSCATDGSCSCAGSCKCKECKCTTC) form a beta region. A divalent metal cation-binding residues include Cys5, Cys7, Cys13, Cys15, Cys19, Cys21, Cys24, Cys26, Cys29, Cys33, Cys34, Cys36, Cys37, Cys41, Cys44, Cys48, Cys50, and Cys57. An alpha region spans residues 30–61 (KKSCCSCCPVGCAKCSQGCVCKEASDKCSCCA). Ser58 carries the phosphoserine modification. 2 residues coordinate a divalent metal cation: Cys59 and Cys60.

The protein belongs to the metallothionein superfamily. Type 1 family.

Functionally, metallothioneins have a high content of cysteine residues that bind various heavy metals; these proteins are transcriptionally regulated by both heavy metals and glucocorticoids. This Cricetulus griseus (Chinese hamster) protein is Metallothionein-2 (MT2).